The sequence spans 341 residues: Glycerol-3-phosphate dehydrogenase [NAD(P)+] (341 aa).

NADPH contacts are provided by Ser14, Phe15, Arg35, and Lys108. Sn-glycerol 3-phosphate is bound by residues Lys108 and Gly136. Ala140 contributes to the NADPH binding site. Sn-glycerol 3-phosphate contacts are provided by Lys191, Asp244, Ser254, Arg255, and Asn256. Lys191 serves as the catalytic Proton acceptor. Residue Arg255 participates in NADPH binding. Residues Val279 and Glu281 each coordinate NADPH.

It belongs to the NAD-dependent glycerol-3-phosphate dehydrogenase family.

The protein resides in the cytoplasm. It catalyses the reaction sn-glycerol 3-phosphate + NAD(+) = dihydroxyacetone phosphate + NADH + H(+). The enzyme catalyses sn-glycerol 3-phosphate + NADP(+) = dihydroxyacetone phosphate + NADPH + H(+). The protein operates within membrane lipid metabolism; glycerophospholipid metabolism. Functionally, catalyzes the reduction of the glycolytic intermediate dihydroxyacetone phosphate (DHAP) to sn-glycerol 3-phosphate (G3P), the key precursor for phospholipid synthesis. This Pseudomonas fluorescens (strain SBW25) protein is Glycerol-3-phosphate dehydrogenase [NAD(P)+].